We begin with the raw amino-acid sequence, 68 residues long: Small ribosomal subunit protein eS17 (68 aa).

It belongs to the eukaryotic ribosomal protein eS17 family.

The sequence is that of Small ribosomal subunit protein eS17 from Staphylothermus marinus (strain ATCC 43588 / DSM 3639 / JCM 9404 / F1).